Consider the following 41-residue polypeptide: U15-myrmicitoxin-Tb1b (41 aa).

The signal sequence occupies residues 1 to 25 (MKIVKLITIFAMIATLMVTVTNGEA). Residue H40 is modified to Histidine amide.

In terms of tissue distribution, expressed by the venom gland.

Its subcellular location is the secreted. Venom protein with unknown function. Does not induce paralysis when a high dose is administered by intrathoracic injection into the blowfly Lucilia caesar. The protein is U15-myrmicitoxin-Tb1b of Tetramorium bicarinatum (Tramp ant).